Consider the following 587-residue polypeptide: MESNGGGGGSPKEAAVVVPSSGDATLGGHLARRLVQVGVSDVFAVPGDFNLTLLDHLIAEPGLRVVGCCNELNAGYAADGYARARGVGACAVTFTVGGLSVLNAIGGAYSENLPLICIVGGPNSNDYGTNRILHHTIGLPDFSQELRCFQPLTCYQAVVNNLDDAHDQIDRAISTAIRESKPVYISVSCNLPAVPHPTFSRDPVPYFLSPRLSNQASLHAALDATLAFLDKAVKPVLVAGPKLRVAKAGGAFVDLADASGYAVAAMPSAKGLVPETLPRFIGTYWGAVSTAFCAEIVESADAYLFAGPIFNDYSSVGYSCLLKKEKAVVVQPDRVTVGNGPAFGCVMMRDFLSELAKRVRKNTTAFDNYKRIFVPEGQLPECEAGEALRVNVLFKHIQRMIGGAEIGAVMAETGDSWFNCQKLRLPEGCGYEFQMQYGSIGWSVGALLGYAQAVQKRVVACIGDGSFQVTAQDVSTMLRCGQRSIIFLINNGGYTIEVEIHDGPYNVIKNWDYVGLVNAIHNGEGRCWATRVRCEEELEAAIATATGDKADSLCFIEVVAHKDDTSKELLEWGSRVSAANSRPPNPQ.

Aspartate 48 and histidine 135 together coordinate substrate. Positions 415 to 496 are thiamine pyrophosphate binding; the sequence is DSWFNCQKLR…FLINNGGYTI (82 aa). Aspartate 464, asparagine 491, and glycine 493 together coordinate Mg(2+). Residue glutamate 497 coordinates substrate.

It belongs to the TPP enzyme family. Homotetramer. The cofactor is a metal cation. It depends on thiamine diphosphate as a cofactor.

The enzyme catalyses a 2-oxocarboxylate + H(+) = an aldehyde + CO2. In Oryza sativa subsp. indica (Rice), this protein is Pyruvate decarboxylase 3 (PDC3).